A 188-amino-acid polypeptide reads, in one-letter code: Dual specificity protein phosphatase 18 (188 aa).

The 142-residue stretch at 19–160 (GLSQITSSLY…LIHYEFQLFG (142 aa)) folds into the Tyrosine-protein phosphatase domain. The sufficient for mitochondrial localization stretch occupies residues 95 to 141 (MKQGRTLLHCAAGVSRSAALCLAYLMKYHAMSLLDAHTWTKSCRPII). The active-site Phosphocysteine intermediate is the Cys104.

This sequence belongs to the protein-tyrosine phosphatase family. Non-receptor class dual specificity subfamily.

Its subcellular location is the cytoplasm. The protein resides in the nucleus. It localises to the mitochondrion inner membrane. It catalyses the reaction O-phospho-L-tyrosyl-[protein] + H2O = L-tyrosyl-[protein] + phosphate. The catalysed reaction is O-phospho-L-seryl-[protein] + H2O = L-seryl-[protein] + phosphate. The enzyme catalyses O-phospho-L-threonyl-[protein] + H2O = L-threonyl-[protein] + phosphate. Functionally, can dephosphorylate single and diphosphorylated synthetic MAPK peptides, with preference for the phosphotyrosine and diphosphorylated forms over phosphothreonine. In vitro, dephosphorylates p-nitrophenyl phosphate (pNPP). The protein is Dual specificity protein phosphatase 18 (DUSP18) of Bos taurus (Bovine).